A 1127-amino-acid polypeptide reads, in one-letter code: Carbamoyl phosphate synthase large chain (1127 aa).

Residues 1–402 (MPKRTDIKSV…SLGKAMRSID (402 aa)) form a carboxyphosphate synthetic domain region. ATP-binding residues include Arg-129, Arg-169, Gly-175, Gly-176, Glu-208, Ile-210, Glu-215, Gly-241, Val-242, His-243, Gln-285, and Glu-299. The ATP-grasp 1 domain occupies 133 to 328 (KKVVDEAGAE…IAKIATKLAL (196 aa)). Gln-285, Glu-299, and Asn-301 together coordinate Mg(2+). 3 residues coordinate Mn(2+): Gln-285, Glu-299, and Asn-301. The oligomerization domain stretch occupies residues 403 to 551 (KRHMGFNWDG…YYYSCYADET (149 aa)). Residues 552–962 (ELRPREREAV…AFAKSQLAAY (411 aa)) form a carbamoyl phosphate synthetic domain region. Positions 681-881 (GEVLKKAEMN…LAKAAARIMA (201 aa)) constitute an ATP-grasp 2 domain. Residues Arg-717, Lys-765, Leu-767, Glu-772, Gly-797, Val-798, His-799, Ser-800, Gln-840, and Glu-852 each contribute to the ATP site. Gln-840, Glu-852, and Asn-854 together coordinate Mg(2+). Gln-840, Glu-852, and Asn-854 together coordinate Mn(2+). The segment at 963-1127 (DGGLPTHGNV…QLFELERREF (165 aa)) is allosteric domain. In terms of domain architecture, MGS-like spans 964–1127 (GGLPTHGNVF…QLFELERREF (164 aa)).

Belongs to the CarB family. In terms of assembly, composed of two chains; the small (or glutamine) chain promotes the hydrolysis of glutamine to ammonia, which is used by the large (or ammonia) chain to synthesize carbamoyl phosphate. Tetramer of heterodimers (alpha,beta)4. The cofactor is Mg(2+). Requires Mn(2+) as cofactor.

It catalyses the reaction hydrogencarbonate + L-glutamine + 2 ATP + H2O = carbamoyl phosphate + L-glutamate + 2 ADP + phosphate + 2 H(+). The enzyme catalyses hydrogencarbonate + NH4(+) + 2 ATP = carbamoyl phosphate + 2 ADP + phosphate + 2 H(+). It participates in amino-acid biosynthesis; L-arginine biosynthesis; carbamoyl phosphate from bicarbonate: step 1/1. The protein operates within pyrimidine metabolism; UMP biosynthesis via de novo pathway; (S)-dihydroorotate from bicarbonate: step 1/3. In terms of biological role, large subunit of the glutamine-dependent carbamoyl phosphate synthetase (CPSase). CPSase catalyzes the formation of carbamoyl phosphate from the ammonia moiety of glutamine, carbonate, and phosphate donated by ATP, constituting the first step of 2 biosynthetic pathways, one leading to arginine and/or urea and the other to pyrimidine nucleotides. The large subunit (synthetase) binds the substrates ammonia (free or transferred from glutamine from the small subunit), hydrogencarbonate and ATP and carries out an ATP-coupled ligase reaction, activating hydrogencarbonate by forming carboxy phosphate which reacts with ammonia to form carbamoyl phosphate. This chain is Carbamoyl phosphate synthase large chain, found in Bifidobacterium longum (strain DJO10A).